The sequence spans 493 residues: Probable malate:quinone oxidoreductase (493 aa).

It belongs to the MQO family. FAD serves as cofactor.

The enzyme catalyses (S)-malate + a quinone = a quinol + oxaloacetate. Its pathway is carbohydrate metabolism; tricarboxylic acid cycle; oxaloacetate from (S)-malate (quinone route): step 1/1. This chain is Probable malate:quinone oxidoreductase, found in Mycobacterium marinum (strain ATCC BAA-535 / M).